The following is a 469-amino-acid chain: Probable indole-3-acetic acid-amido synthetase GH3.13 (469 aa).

A disordered region spans residues 1-26; the sequence is MTSTSSENAPDHDHDHDASSPAPATA. Residues 9 to 18 are compositionally biased toward basic and acidic residues; it reads APDHDHDHDA.

Belongs to the IAA-amido conjugating enzyme family.

Functionally, may catalyze the synthesis of indole-3-acetic acid (IAA)-amino acid conjugates, providing a mechanism for the plant to cope with the presence of excess auxin. The polypeptide is Probable indole-3-acetic acid-amido synthetase GH3.13 (GH3.13) (Oryza sativa subsp. japonica (Rice)).